Reading from the N-terminus, the 206-residue chain is Small ribosomal subunit protein eS8 (206 aa).

The disordered stretch occupies residues Met-1–Lys-37.

Belongs to the eukaryotic ribosomal protein eS8 family. Component of the small ribosomal subunit. Mature ribosomes consist of a small (40S) and a large (60S) subunit. The 40S subunit contains about 32 different proteins and 1 molecule of RNA (18S). The 60S subunit contains 45 different proteins and 3 molecules of RNA (25S, 5.8S and 5S).

The protein resides in the cytoplasm. Component of the ribosome, a large ribonucleoprotein complex responsible for the synthesis of proteins in the cell. The small ribosomal subunit (SSU) binds messenger RNAs (mRNAs) and translates the encoded message by selecting cognate aminoacyl-transfer RNA (tRNA) molecules. The large subunit (LSU) contains the ribosomal catalytic site termed the peptidyl transferase center (PTC), which catalyzes the formation of peptide bonds, thereby polymerizing the amino acids delivered by tRNAs into a polypeptide chain. The nascent polypeptides leave the ribosome through a tunnel in the LSU and interact with protein factors that function in enzymatic processing, targeting, and the membrane insertion of nascent chains at the exit of the ribosomal tunnel. The chain is Small ribosomal subunit protein eS8 (RPS8A) from Candida albicans (strain SC5314 / ATCC MYA-2876) (Yeast).